The primary structure comprises 347 residues: 5-deoxyribose 1-phosphate isomerase (347 aa).

Residues 48 to 50 (RGA), Arg-91, and Gln-198 contribute to the substrate site. The active-site Proton donor is Asp-239. 249–250 (NK) is a substrate binding site.

This sequence belongs to the EIF-2B alpha/beta/delta subunits family. DrdI subfamily.

The enzyme catalyses 5-deoxy-alpha-D-ribose 1-phosphate = 5-deoxy-D-ribulose 1-phosphate. The protein operates within carbohydrate degradation. Functionally, catalyzes the isomerization of 5-deoxy-alpha-D-ribose 1-phosphate to 5-deoxy-D-ribulose 1-phosphate, as part of a 5-deoxyribose salvage pathway that recycles this toxic radical SAM enzyme by-product to mainstream metabolites. The protein is 5-deoxyribose 1-phosphate isomerase of Petrotoga mobilis (strain DSM 10674 / SJ95).